The following is a 404-amino-acid chain: NADH-quinone oxidoreductase subunit D 2 (404 aa).

It belongs to the complex I 49 kDa subunit family. In terms of assembly, NDH-1 is composed of 14 different subunits. Subunits NuoB, C, D, E, F, and G constitute the peripheral sector of the complex.

It localises to the cell inner membrane. The catalysed reaction is a quinone + NADH + 5 H(+)(in) = a quinol + NAD(+) + 4 H(+)(out). Functionally, NDH-1 shuttles electrons from NADH, via FMN and iron-sulfur (Fe-S) centers, to quinones in the respiratory chain. The immediate electron acceptor for the enzyme in this species is believed to be ubiquinone. Couples the redox reaction to proton translocation (for every two electrons transferred, four hydrogen ions are translocated across the cytoplasmic membrane), and thus conserves the redox energy in a proton gradient. This Rhizobium etli (strain ATCC 51251 / DSM 11541 / JCM 21823 / NBRC 15573 / CFN 42) protein is NADH-quinone oxidoreductase subunit D 2.